The sequence spans 407 residues: Peptidase T (407 aa).

A Zn(2+)-binding site is contributed by His-82. Residue Asp-84 is part of the active site. Zn(2+) is bound at residue Asp-143. The Proton acceptor role is filled by Glu-177. Residues Glu-178, Asp-200, and His-382 each coordinate Zn(2+).

It belongs to the peptidase M20B family. Requires Zn(2+) as cofactor.

Its subcellular location is the cytoplasm. The enzyme catalyses Release of the N-terminal residue from a tripeptide.. Its function is as follows. Cleaves the N-terminal amino acid of tripeptides. The chain is Peptidase T from Streptococcus pyogenes serotype M28 (strain MGAS6180).